The following is a 634-amino-acid chain: Probable potassium transport system protein Kup (634 aa).

The next 12 helical transmembrane spans lie at Ile-21–Leu-41, Ile-61–Ile-81, Ile-110–Ile-130, Pro-148–Cys-168, Phe-180–Ala-200, Phe-217–Thr-237, Trp-258–Leu-278, Gly-296–Ile-316, Ile-348–Phe-368, Ala-377–Ala-397, Leu-408–Ile-428, and Asp-432–Leu-452.

The protein belongs to the HAK/KUP transporter (TC 2.A.72) family.

It localises to the cell inner membrane. It catalyses the reaction K(+)(in) + H(+)(in) = K(+)(out) + H(+)(out). Functionally, transport of potassium into the cell. Likely operates as a K(+):H(+) symporter. In Xylella fastidiosa (strain 9a5c), this protein is Probable potassium transport system protein Kup.